Consider the following 209-residue polypeptide: GTP-binding protein RHO1 (209 aa).

Residue S2 is modified to N-acetylserine. 17 to 24 (GDGACGKT) serves as a coordination point for GTP. Positions 39–47 (YVPTVFENY) match the Effector region motif. GTP contacts are provided by residues 64 to 68 (DTAGQ) and 122 to 125 (CKVD). A disordered region spans residues 187–209 (KSKTNGKAKKNTTEKKKKKCVLL). The segment covering 190–209 (TNGKAKKNTTEKKKKKCVLL) has biased composition (basic residues). C206 carries the post-translational modification Cysteine methyl ester. C206 is lipidated: S-geranylgeranyl cysteine. The propeptide at 207–209 (VLL) is removed in mature form.

It belongs to the small GTPase superfamily. Rho family. As to quaternary structure, interacts with BEM4; the interaction is direct. Interacts with SEC3; the interaction is direct. Interacts with the GAP BAG7. Interacts with the GAP LRG1. Interacts with the GAP SAC7. Interacts with the GAP RDI1. Interacts with the 1,3-beta-glucan synthase component FKS1. Interacts with the protein kinase PKC1. Interacts with the G protein beta subunit STE4. Interacts with SKN7. Interacts with TUS1. Interacts with BNI1.

Its subcellular location is the cell membrane. The protein resides in the endosome membrane. It is found in the peroxisome membrane. The enzyme catalyses GTP + H2O = GDP + phosphate + H(+). Alternates between an inactive form bound to GDP and an active form bound to GTP. Activated by the guanine nucleotide-exchange factors (GEFs) ROM1, ROM2 and TUS1, and inactivated by GTPase-activating proteins (GAPs) BAG7, BEM2, LRG1, and SAC7, and the Rho GDP-dissociation inhibitor RDI1. The different GAPs regulate RHO1 in a target-specific manner. In terms of biological role, acts as a central regulator in the cell wall integrity signaling pathway, which is regulated by the cell cycle and in response to various types of cell wall stress. Integrates signals from different cell surface sensors, and activates a set of effectors, regulating processes including beta-glucan synthesis at the site of wall remodeling, gene expression related to cell wall biogenesis, organization of the actin cytoskeleton, and protein- and secretory vesicle-targeting to the growth site. Activates the protein kinase C (PKC1) MAP kinase cascade, the beta-1,3-glucan synthase (FKS1), the formin BNI1, the exocyst component SEC3 and the transcription factor SKN7. The polypeptide is GTP-binding protein RHO1 (RHO1) (Saccharomyces cerevisiae (strain ATCC 204508 / S288c) (Baker's yeast)).